Here is a 366-residue protein sequence, read N- to C-terminus: CD44 antigen (366 aa).

The first 20 residues, 1-20 (MDTFWWRAAWGLCLVQLSLA), serve as a signal peptide directing secretion. Residues 21–273 (QIDLNITCRY…GPMRKPQIPE (253 aa)) are Extracellular-facing. Asn25 carries N-linked (GlcNAc...) asparagine glycosylation. Disulfide bonds link Cys28–Cys129, Cys53–Cys118, and Cys77–Cys97. The region spanning 32 to 120 (GVFHVEKNGR…TSQYDTICFN (89 aa)) is the Link domain. Position 41 (Arg41) interacts with hyaluronan. Asn57 is a glycosylation site (N-linked (GlcNAc...) asparagine). Hyaluronan-binding residues include Arg78 and Tyr79. Asn100 carries N-linked (GlcNAc...) asparagine glycosylation. Tyr105 provides a ligand contact to hyaluronan. N-linked (GlcNAc...) asparagine glycans are attached at residues Asn110 and Asn120. Residues 156 to 165 (TKKGEYRTNP) are compositionally biased toward basic and acidic residues. Residues 156-266 (TKKGEYRTNP…HGANTTSGPM (111 aa)) form a disordered region. Low complexity predominate over residues 184–196 (SSGSPSERSTSGG). Ser185 is a glycosylation site (O-linked (Xyl...) (chondroitin sulfate) serine). Asn222 carries N-linked (GlcNAc...) asparagine glycosylation. Residues 222–231 (NTSDTRDYGS) show a composition bias toward basic and acidic residues. Residues 229–273 (YGSSHDPSGRSYTTHASESAGHSSGSEEHGANTTSGPMRKPQIPE) form a stem region. Residues 243–252 (HASESAGHSS) are compositionally biased toward low complexity. The N-linked (GlcNAc...) asparagine glycan is linked to Asn260. The helical transmembrane segment at 274–294 (WLIILASLLALALILAVCIAV) threads the bilayer. Over 295 to 366 (NSRRRCGQKK…LQNVDMKIGV (72 aa)) the chain is Cytoplasmic. Phosphoserine; by PKC is present on Ser296. The segment at 297–315 (RRRCGQKKKLVINNGNGTM) is required for interaction with EZR, MSN and RDX and for co-localization to microvilli. Thr314 bears the Phosphothreonine mark. Ser321 and Ser330 each carry phosphoserine.

Interacts with PKN2. Interacts with TIAM1 and TIAM2. Interacts with HA, as well as other glycosaminoglycans, collagen, laminin, and fibronectin via its N-terminal segment. Interacts with UNC119. Interacts with PDPN (via extracellular domain); this interaction is required for PDPN-mediated directional migration and regulation of lamellipodia extension/stabilization during cell spreading and migration. Interacts with RDX, EZR and MSN. Interacts with EGFR. Interacts with CD74; this complex is essential for the MIF-induced signaling cascade that results in B cell survival. Post-translationally, N-glycosylated. In terms of processing, O-glycosylated; contains chondroitin sulfate glycans which can be more or less sulfated. Phosphorylated; activation of PKC results in the dephosphorylation of Ser-330 (constitutive phosphorylation site), and the phosphorylation of Ser-296. As to expression, mesenteric lymph node and liver, not in heart.

It is found in the cell membrane. It localises to the cell projection. Its subcellular location is the microvillus. The protein localises to the secreted. Its function is as follows. Cell-surface receptor that plays a role in cell-cell interactions, cell adhesion and migration, helping them to sense and respond to changes in the tissue microenvironment. Participates thereby in a wide variety of cellular functions including the activation, recirculation and homing of T-lymphocytes, hematopoiesis, inflammation and response to bacterial infection. Engages, through its ectodomain, extracellular matrix components such as hyaluronan/HA, collagen, growth factors, cytokines or proteases and serves as a platform for signal transduction by assembling, via its cytoplasmic domain, protein complexes containing receptor kinases and membrane proteases. Such effectors include PKN2, the RhoGTPases RAC1 and RHOA, Rho-kinases and phospholipase C that coordinate signaling pathways promoting calcium mobilization and actin-mediated cytoskeleton reorganization essential for cell migration and adhesion. The protein is CD44 antigen (CD44) of Bos taurus (Bovine).